Reading from the N-terminus, the 356-residue chain is Aromatic dipeptide epimerase (356 aa).

Substrate-binding positions include Thr-136 and 161 to 163 (KVK). Mg(2+) is bound by residues Asp-191, Glu-219, and Asp-244. Residues Lys-268 and 320–322 (DLD) each bind substrate.

It belongs to the mandelate racemase/muconate lactonizing enzyme family. The cofactor is Mg(2+).

Functionally, has epimerase activity with a variety of hydrophobic dipeptides (in vitro). Enzyme activity is highest with L-Phe-L-Tyr, but is still relatively low, suggesting that L-Phe-L-Tyr is not the physiological substrate. This is Aromatic dipeptide epimerase from Herpetosiphon aurantiacus (strain ATCC 23779 / DSM 785 / 114-95).